The primary structure comprises 408 residues: uncharacterized protein (408 aa).

A run of 12 helical transmembrane segments spans residues 9 to 29, 49 to 69, 77 to 97, 100 to 120, 135 to 155, 167 to 187, 216 to 236, 252 to 272, 283 to 303, 308 to 328, 340 to 360, and 373 to 393; these read WFVLLFTFVFAIGMNSFRNSF, VSVSIFMITTGIVQFFVGFFI, IMALGAVCISASFLVLPYSPN, VFSAIYGVLGGIGYSCAVGVT, LALAILTNANSAGLLLLSPIW, TYTILGIVMAAVLLPLLVFGM, LIHILYFGVFTCGFTMGIIDA, GMMAAFGAFIIIGGLLAGWLS, SILFFIRLLSLICLLIPILGI, LWYFGFILLFGLSYTGVIPLT, LIGSLLGINFFIHQVAGALSV, and YLLIVAVCIVFVGLSAVIELV.

Belongs to the major facilitator superfamily.

The protein resides in the cell membrane. This is an uncharacterized protein from Bacillus subtilis (strain 168).